Here is a 195-residue protein sequence, read N- to C-terminus: Toxin protein Tse4 (195 aa).

The next 4 membrane-spanning stretches (helical) occupy residues 20–40 (ASGG…ITLL), 116–136 (YVEL…LFGL), 140–160 (LLAA…GASM), and 171–191 (ALLM…AAYL).

It is found in the host membrane. The protein resides in the secreted. Toxin secreted by the H1 type VI (H1-T6SS) secretion system into the periplasm of recipient cells. In Pseudomonas aeruginosa (strain ATCC 15692 / DSM 22644 / CIP 104116 / JCM 14847 / LMG 12228 / 1C / PRS 101 / PAO1), this protein is Toxin protein Tse4.